Consider the following 394-residue polypeptide: Short-chain dehydrogenase/reductase family 42E member 1 (394 aa).

Tyr153 serves as the catalytic Proton acceptor. Lys157 serves as a coordination point for NAD(+). 2 helical membrane-spanning segments follow: residues 283–303 (LPLTLIYCLAFLVEMTHFIVG) and 367–387 (FMLWDGILILLLALSVLTWIL).

It belongs to the 3-beta-HSD family.

It is found in the membrane. This is Short-chain dehydrogenase/reductase family 42E member 1 (Sdr42e1) from Mus musculus (Mouse).